Consider the following 144-residue polypeptide: Putative low molecular weight protein-tyrosine-phosphatase (144 aa).

Cys-9 acts as the Nucleophile in catalysis. The active site involves Arg-15. The active-site Proton donor is the Asp-115.

Belongs to the low molecular weight phosphotyrosine protein phosphatase family.

The catalysed reaction is O-phospho-L-tyrosyl-[protein] + H2O = L-tyrosyl-[protein] + phosphate. This chain is Putative low molecular weight protein-tyrosine-phosphatase, found in Klebsiella pneumoniae.